Reading from the N-terminus, the 338-residue chain is Large ribosomal subunit protein uL10 (338 aa).

Positions 297–338 are disordered; that stretch reads PSAQQTQTQQSTAEEKKEEKKEEEKKGPSEEEIGSGLASLFG. The segment covering 298-308 has biased composition (low complexity); sequence SAQQTQTQQST. Positions 309–325 are enriched in basic and acidic residues; sequence AEEKKEEKKEEEKKGPS.

Belongs to the universal ribosomal protein uL10 family. Part of the 50S ribosomal subunit. Forms part of the ribosomal stalk which helps the ribosome interact with GTP-bound translation factors. Forms a heptameric L10(L12)2(L12)2(L12)2 complex, where L10 forms an elongated spine to which the L12 dimers bind in a sequential fashion.

Functionally, forms part of the ribosomal stalk, playing a central role in the interaction of the ribosome with GTP-bound translation factors. In Saccharolobus islandicus (strain M.14.25 / Kamchatka #1) (Sulfolobus islandicus), this protein is Large ribosomal subunit protein uL10.